Reading from the N-terminus, the 393-residue chain is Succinate--CoA ligase [ADP-forming] subunit beta (393 aa).

Residues 9 to 242 form the ATP-grasp domain; the sequence is KELFAKHGVP…RAATDPLEWK (234 aa). ATP-binding positions include Lys-45, 52–54, Ser-94, and Glu-99; that span reads GRG. Residues Asn-191 and Asp-211 each coordinate Mg(2+). Substrate-binding positions include Asn-262 and 324–326; that span reads GIT.

It belongs to the succinate/malate CoA ligase beta subunit family. Heterotetramer of two alpha and two beta subunits. Mg(2+) is required as a cofactor.

It catalyses the reaction succinate + ATP + CoA = succinyl-CoA + ADP + phosphate. It carries out the reaction GTP + succinate + CoA = succinyl-CoA + GDP + phosphate. Its pathway is carbohydrate metabolism; tricarboxylic acid cycle; succinate from succinyl-CoA (ligase route): step 1/1. Functionally, succinyl-CoA synthetase functions in the citric acid cycle (TCA), coupling the hydrolysis of succinyl-CoA to the synthesis of either ATP or GTP and thus represents the only step of substrate-level phosphorylation in the TCA. The beta subunit provides nucleotide specificity of the enzyme and binds the substrate succinate, while the binding sites for coenzyme A and phosphate are found in the alpha subunit. The polypeptide is Succinate--CoA ligase [ADP-forming] subunit beta (Mycobacterium leprae (strain Br4923)).